Consider the following 228-residue polypeptide: 2,3-bisphosphoglycerate-dependent phosphoglycerate mutase (228 aa).

Residues 8–15 (RHGQSVWN), 21–22 (TG), arginine 60, 87–90 (ERHY), lysine 98, 114–115 (RR), and 183–184 (GN) each bind substrate. Residue histidine 9 is the Tele-phosphohistidine intermediate of the active site. The active-site Proton donor/acceptor is glutamate 87.

The protein belongs to the phosphoglycerate mutase family. BPG-dependent PGAM subfamily.

The enzyme catalyses (2R)-2-phosphoglycerate = (2R)-3-phosphoglycerate. It functions in the pathway carbohydrate degradation; glycolysis; pyruvate from D-glyceraldehyde 3-phosphate: step 3/5. In terms of biological role, catalyzes the interconversion of 2-phosphoglycerate and 3-phosphoglycerate. The sequence is that of 2,3-bisphosphoglycerate-dependent phosphoglycerate mutase from Staphylococcus saprophyticus subsp. saprophyticus (strain ATCC 15305 / DSM 20229 / NCIMB 8711 / NCTC 7292 / S-41).